We begin with the raw amino-acid sequence, 333 residues long: 4-hydroxyproline epimerase (333 aa).

The Proton acceptor role is filled by Cys90. Residues 91-92 and Asp249 each bind substrate; that span reads GH. Cys253 acts as the Proton donor in catalysis. 254 to 255 is a binding site for substrate; that stretch reads GT.

It belongs to the proline racemase family. As to quaternary structure, homodimer.

The enzyme catalyses trans-4-hydroxy-L-proline = cis-4-hydroxy-D-proline. Functionally, allows intracellular utilization of 4-hydroxyproline, one of the major constituents of host collagen, by converting 4-hydroxy-L-proline to 4-hydroxy-D-proline, which can be further metabolized by intracellular 4-hydroxy-D-proline oxidases. Strong B-cell mitogen. Plays an important role in the regulation of intra- and extracellular amino acid pools, allowing the bacterium to profit from host precursors and enzymatic pathways. The sequence is that of 4-hydroxyproline epimerase from Brucella canis (strain ATCC 23365 / NCTC 10854 / RM-666).